We begin with the raw amino-acid sequence, 291 residues long: Protease HtpX (291 aa).

The next 2 helical transmembrane spans lie at Ile4–Leu24 and Gly36–Ile56. His142 contributes to the Zn(2+) binding site. The active site involves Glu143. Residue His146 participates in Zn(2+) binding. The next 2 membrane-spanning stretches (helical) occupy residues Gly150 to Ala170 and Phe193 to Trp213. Glu219 is a binding site for Zn(2+).

It belongs to the peptidase M48B family. Zn(2+) is required as a cofactor.

The protein resides in the cell inner membrane. This is Protease HtpX from Pseudomonas aeruginosa (strain LESB58).